The primary structure comprises 384 residues: MSIRKTNPFISMANSYVMDAPEPSNMSYFWNFGSLLGVCLVMQLCTGMFLAMHYCSNLDLAFISVQHMMTEVNYGWLLRYAHSNGAGFFFMFVYLHMARGIYYGSYRKPRMALWNMGVMMFLLMMMTAFMGYCLVYGQMSHWGATVMTNLVTAMPYLGQAMAEFIWGGSSVSNPTIQRFFSLHYLLPFVIAGICCLHLLALHSHGSNNPLGMTANIDRMPMHPFFLFKDTVTIFAFLFVYFFLISYYPEYLGDPENNIPGNPLVTPAAIVPEFYLLPFYAILRAISSKMMGVLAMLFAILILFVLPFVDFSIIRGNAFKFLSKILFGFFCVNFILLGLIGAMHIEVPYIIIGQLATIFYFSYFMILLPLISILENMLFYLAIKR.

The next 4 helical transmembrane spans lie at 32–52 (FGSL…FLAM), 76–98 (WLLR…LHMA), 113–133 (LWNM…MGYC), and 179–199 (FFSL…LHLL). Heme b-binding residues include His82 and His96. Heme b-binding residues include His183 and His197. Residue His202 participates in a ubiquinone binding. 4 helical membrane passes run 225 to 245 (FLFK…FLIS), 289 to 309 (MMGV…PFVD), 321 to 341 (LSKI…LIGA), and 348 to 368 (YIII…ILLP).

The protein belongs to the cytochrome b family. As to quaternary structure, fungal cytochrome b-c1 complex contains 10 subunits; 3 respiratory subunits, 2 core proteins and 5 low-molecular weight proteins. Cytochrome b-c1 complex is a homodimer. Requires heme b as cofactor.

Its subcellular location is the mitochondrion inner membrane. Its function is as follows. Component of the ubiquinol-cytochrome c reductase complex (complex III or cytochrome b-c1 complex) that is part of the mitochondrial respiratory chain. The b-c1 complex mediates electron transfer from ubiquinol to cytochrome c. Contributes to the generation of a proton gradient across the mitochondrial membrane that is then used for ATP synthesis. The chain is Cytochrome b (COB) from Starmerella bacillaris (Yeast).